A 365-amino-acid polypeptide reads, in one-letter code: Chorismate synthase (365 aa).

The NADP(+) site is built by Arg48 and Arg54. FMN-binding positions include 125–127 (RSS), 237–238 (NA), Gly277, 292–296 (KPTSS), and Arg318.

This sequence belongs to the chorismate synthase family. Homotetramer. Requires FMNH2 as cofactor.

It carries out the reaction 5-O-(1-carboxyvinyl)-3-phosphoshikimate = chorismate + phosphate. The protein operates within metabolic intermediate biosynthesis; chorismate biosynthesis; chorismate from D-erythrose 4-phosphate and phosphoenolpyruvate: step 7/7. In terms of biological role, catalyzes the anti-1,4-elimination of the C-3 phosphate and the C-6 proR hydrogen from 5-enolpyruvylshikimate-3-phosphate (EPSP) to yield chorismate, which is the branch point compound that serves as the starting substrate for the three terminal pathways of aromatic amino acid biosynthesis. This reaction introduces a second double bond into the aromatic ring system. The polypeptide is Chorismate synthase (Polaromonas naphthalenivorans (strain CJ2)).